The sequence spans 156 residues: Tripartite terminase subunit 2 (156 aa).

A disordered region spans residues 1–37; it reads MYESENASEHHPELEDVFSENTGDSNPSMGSSDSTRS. Positions 19–37 are enriched in polar residues; that stretch reads SENTGDSNPSMGSSDSTRS.

The protein belongs to the herpesviridae TRM2 protein family. Associates with TRM1 and TRM3 to form the tripartite terminase complex.

The protein resides in the host nucleus. Component of the molecular motor that translocates viral genomic DNA in empty capsid during DNA packaging. Forms a tripartite terminase complex together with TRM1 and TRM3 in the host cytoplasm. Once the complex reaches the host nucleus, it interacts with the capsid portal vertex. This portal forms a ring in which genomic DNA is translocated into the capsid. The protein is Tripartite terminase subunit 2 of Varicella-zoster virus (strain Dumas) (HHV-3).